Consider the following 493-residue polypeptide: Membrane-bound lytic murein transglycosylase F (493 aa).

An N-terminal signal peptide occupies residues 1–21 (MKRLRFNYLLIGLITVLLALA). Residues 22-268 (LWPSIPWYGG…RLDEKYLGHV (247 aa)) are non-LT domain. The segment at 269 to 493 (GTFDYVDTRT…LNPVSALPLP (225 aa)) is LT domain. Residue E313 is part of the active site.

This sequence in the N-terminal section; belongs to the bacterial solute-binding protein 3 family. The protein in the C-terminal section; belongs to the transglycosylase Slt family.

It is found in the cell outer membrane. It catalyses the reaction Exolytic cleavage of the (1-&gt;4)-beta-glycosidic linkage between N-acetylmuramic acid (MurNAc) and N-acetylglucosamine (GlcNAc) residues in peptidoglycan, from either the reducing or the non-reducing ends of the peptidoglycan chains, with concomitant formation of a 1,6-anhydrobond in the MurNAc residue.. Functionally, murein-degrading enzyme that degrades murein glycan strands and insoluble, high-molecular weight murein sacculi, with the concomitant formation of a 1,6-anhydromuramoyl product. Lytic transglycosylases (LTs) play an integral role in the metabolism of the peptidoglycan (PG) sacculus. Their lytic action creates space within the PG sacculus to allow for its expansion as well as for the insertion of various structures such as secretion systems and flagella. The protein is Membrane-bound lytic murein transglycosylase F of Erwinia tasmaniensis (strain DSM 17950 / CFBP 7177 / CIP 109463 / NCPPB 4357 / Et1/99).